A 1458-amino-acid polypeptide reads, in one-letter code: Anaphase-promoting complex subunit 1 (1458 aa).

Residues 186-210 (QSIKSSRNRRRESSFSREKNPDLTR) are disordered. The span at 196-210 (RESSFSREKNPDLTR) shows a compositional bias: basic and acidic residues. PC repeat units lie at residues 873 to 895 (GLLL…KLLS), 959 to 982 (AAGF…SDLK), 1006 to 1024 (GAIM…LEVA), and 1099 to 1124 (GICF…INFL).

The protein belongs to the APC1 family. The APC/C is composed of at least 13 subunits: apc1, apc2, nuc2, apc4, apc5, cut9, apc8, apc10, apc11, hcn1, apc13, apc14 and apc15.

Its function is as follows. Component of the anaphase-promoting complex/cyclosome (APC/C), a cell cycle-regulated E3 ubiquitin-protein ligase complex that controls progression through mitosis and the G1 phase of the cell cycle. The APC/C is thought to confer substrate specificity and, in the presence of ubiquitin-conjugating E2 enzymes, it catalyzes the formation of protein-ubiquitin conjugates that are subsequently degraded by the 26S proteasome. Mutations to this protein prevent the exit from mitosis. In Schizosaccharomyces pombe (strain 972 / ATCC 24843) (Fission yeast), this protein is Anaphase-promoting complex subunit 1 (cut4).